The sequence spans 199 residues: Pyridoxine/pyridoxamine 5'-phosphate oxidase (199 aa).

Residues 44-49 (RTVLLK), 59-60 (YT), Lys-66, and Gln-91 contribute to the FMN site. A substrate-binding site is contributed by Lys-49. The substrate site is built by Tyr-109, Arg-113, and Ser-117. FMN-binding positions include 126–127 (QS) and Trp-171. Substrate is bound at residue 177–179 (RLH). Arg-181 contributes to the FMN binding site.

This sequence belongs to the pyridoxamine 5'-phosphate oxidase family. In terms of assembly, homodimer. The cofactor is FMN.

The catalysed reaction is pyridoxamine 5'-phosphate + O2 + H2O = pyridoxal 5'-phosphate + H2O2 + NH4(+). It carries out the reaction pyridoxine 5'-phosphate + O2 = pyridoxal 5'-phosphate + H2O2. Its pathway is cofactor metabolism; pyridoxal 5'-phosphate salvage; pyridoxal 5'-phosphate from pyridoxamine 5'-phosphate: step 1/1. It functions in the pathway cofactor metabolism; pyridoxal 5'-phosphate salvage; pyridoxal 5'-phosphate from pyridoxine 5'-phosphate: step 1/1. Catalyzes the oxidation of either pyridoxine 5'-phosphate (PNP) or pyridoxamine 5'-phosphate (PMP) into pyridoxal 5'-phosphate (PLP). This is Pyridoxine/pyridoxamine 5'-phosphate oxidase from Xanthomonas euvesicatoria pv. vesicatoria (strain 85-10) (Xanthomonas campestris pv. vesicatoria).